The sequence spans 782 residues: E3 UFM1-protein ligase 1 homolog (782 aa).

The interval 405 to 478 (VSTQELEDDG…TRGGGGASKK (74 aa)) is disordered.

The protein belongs to the UFL1 family.

E3 UFM1-protein ligase that mediates ufmylation of target proteins. This Drosophila sechellia (Fruit fly) protein is E3 UFM1-protein ligase 1 homolog.